The following is a 404-amino-acid chain: Glycosyltransferase GlyB (404 aa).

Residues 1–267 form a GT8 domain region; sequence MNTKSIVFNA…ILLRKDIISR (267 aa). UDP-binding positions include 9 to 14 and 103 to 104; these read NADNDY and DS. Mn(2+)-binding residues include D103, D105, and H228. 228 to 233 is a binding site for UDP; the sequence is HYTGVK.

This sequence in the N-terminal section; belongs to the glycosyltransferase 8 family.

In terms of biological role, may be involved in the polymorphic O-glycosylation of the serine-rich repeat protein PsrP. Has equal hydrolytic activity against both UDP-galactose and UDP-glucose; no glycosyltransferase activity has been seen with tested substrates. In Streptococcus pneumoniae serotype 4 (strain ATCC BAA-334 / TIGR4), this protein is Glycosyltransferase GlyB.